Here is a 449-residue protein sequence, read N- to C-terminus: Hyaluronidase-2 (449 aa).

The N-terminal stretch at Met-1 to Ala-23 is a signal peptide. Cystine bridges form between Cys-47/Cys-340 and Cys-211/Cys-227. 3 N-linked (GlcNAc...) asparagine glycosylation sites follow: Asn-67, Asn-103, and Asn-111. The active-site Proton donor is the Glu-135. Asn-153 carries N-linked (GlcNAc...) asparagine glycosylation. N-linked (GlcNAc...) asparagine glycosylation is present at Asn-357. Intrachain disulfides connect Cys-365/Cys-376, Cys-370/Cys-427, and Cys-429/Cys-438. Asn-401 carries an N-linked (GlcNAc...) asparagine glycan. The EGF-like domain maps to Cys-427 to Cys-438.

The protein belongs to the glycosyl hydrolase 56 family. As to quaternary structure, monomer. Expressed by the venom gland.

It localises to the secreted. It carries out the reaction Random hydrolysis of (1-&gt;4)-linkages between N-acetyl-beta-D-glucosamine and D-glucuronate residues in hyaluronate.. Functionally, snake venom endo-hyaluronidase that degrades hyaluronan to smaller oligosaccharide fragments. In venom, it is not toxic by itself, but increases the diffusion of other venom proteins by degrading the extracellular matrix. In addition, it displays antiedematogenic activity. In Bitis arietans (African puff adder), this protein is Hyaluronidase-2.